A 154-amino-acid chain; its full sequence is MMPTTLFAGTHITMTTVYHITVSQIQLSLLKVTAFQHQNSKKTTKLVVILRIGTQVLKTMSLYMAISPKFTTSLSLHKLLQTLVLKMLHSSSLTSLLKTHRMCKYTQSTALQELLIQQWIQFMMSRRRLLACLCKHKKVSTNLCTHSFRKKQVR.

Positions 80–138 are mitochondrial targeting signal; that stretch reads LQTLVLKMLHSSSLTSLLKTHRMCKYTQSTALQELLIQQWIQFMMSRRRLLACLCKHKK. The interval 134–154 is nucleolar targeting; it reads CKHKKVSTNLCTHSFRKKQVR. A Bipartite nuclear localization signal motif is present at residues 135–153; that stretch reads KHKKVSTNLCTHSFRKKQV.

In terms of assembly, interacts with host RUNX1 isoform b.

Its subcellular location is the host nucleus. The protein localises to the host nucleolus. It localises to the host mitochondrion. Induces host cell G0/G1 arrest and apoptosis. This is ORF3b protein from Homo sapiens (Human).